Consider the following 668-residue polypeptide: Ankyrin repeat domain-containing protein OPG023 (668 aa).

9 ANK repeats span residues 31-64, 101-131, 135-166, 199-231, 235-266, 277-311, 334-368, 458-487, and 491-521; these read FKNNALHAYLFNEHCNNVEVVKLLLDSGTNPLHK, NDFNIFTYMKSKNVDIDLIKVLVEHGFDFSV, KHHSVIENYVMTDDPVPEIIDLFIENGCSVIY, YIISHLYSESDSRSCVNPEVVKCLINHGINPSS, NYCTALQYYIKSSHIDIDIVKLLMKGIDNTAY, RGIMADYLNSDYRYNKDVDLDLVKLFLENGKPHGI, NSDVLQHILIEYITFSDIDISLVEYMLEYGAVVNK, RGETLLHKAVRYNKQSLVSLLLESGSDVNI, and NGYTCIAIAINESRNIELLNMLLCHKPTLDC. Residues 586 to 666 form a PRANC/F-box-like region; the sequence is GNTMFSLIFT…PYTIKYKIFE (81 aa).

This sequence belongs to the orthopoxvirus OPG023 family. As to quaternary structure, interacts (via N-terminus) with host RELA. Interacts (via PRANC/F-box-like domain) with the SKP1 component of the host SCF ubiquitin ligase complex.

Functionally, substrate-specific adapter of SKP1-containing E3 ubiquitin-protein ligases which mediate the ubiquitination and subsequent proteasomal degradation of host target proteins. Prevents activation and subsequent nuclear localization of NF-kappa-B in infected cells, by targeting NF-kappa-B RELA subunit to the SCF E3 ligase complex. This is Ankyrin repeat domain-containing protein OPG023 (OPG023) from Bos taurus (Bovine).